The chain runs to 435 residues: Xylose isomerase (435 aa).

Residues H100 and D103 contribute to the active site. E231, E267, H270, D295, D306, D308, and D338 together coordinate Mg(2+).

Belongs to the xylose isomerase family. In terms of assembly, homotetramer. It depends on Mg(2+) as a cofactor.

It localises to the cytoplasm. It catalyses the reaction alpha-D-xylose = alpha-D-xylulofuranose. In Brucella anthropi (strain ATCC 49188 / DSM 6882 / CCUG 24695 / JCM 21032 / LMG 3331 / NBRC 15819 / NCTC 12168 / Alc 37) (Ochrobactrum anthropi), this protein is Xylose isomerase.